The chain runs to 352 residues: Histidinol-phosphate aminotransferase (352 aa).

K221 bears the N6-(pyridoxal phosphate)lysine mark.

The protein belongs to the class-II pyridoxal-phosphate-dependent aminotransferase family. Histidinol-phosphate aminotransferase subfamily. Homodimer. Requires pyridoxal 5'-phosphate as cofactor.

It catalyses the reaction L-histidinol phosphate + 2-oxoglutarate = 3-(imidazol-4-yl)-2-oxopropyl phosphate + L-glutamate. It functions in the pathway amino-acid biosynthesis; L-histidine biosynthesis; L-histidine from 5-phospho-alpha-D-ribose 1-diphosphate: step 7/9. The chain is Histidinol-phosphate aminotransferase from Staphylococcus aureus (strain bovine RF122 / ET3-1).